The sequence spans 177 residues: Shikimate kinase (177 aa).

14–19 lines the ATP pocket; the sequence is GSGKST. Residue Ser-18 coordinates Mg(2+). Substrate is bound by residues Asp-36, Arg-60, and Gly-82. Position 120 (Arg-120) interacts with ATP. Residue Arg-139 participates in substrate binding.

Belongs to the shikimate kinase family. In terms of assembly, monomer. Mg(2+) serves as cofactor.

Its subcellular location is the cytoplasm. The enzyme catalyses shikimate + ATP = 3-phosphoshikimate + ADP + H(+). The protein operates within metabolic intermediate biosynthesis; chorismate biosynthesis; chorismate from D-erythrose 4-phosphate and phosphoenolpyruvate: step 5/7. Its function is as follows. Catalyzes the specific phosphorylation of the 3-hydroxyl group of shikimic acid using ATP as a cosubstrate. In Gloeobacter violaceus (strain ATCC 29082 / PCC 7421), this protein is Shikimate kinase.